Consider the following 706-residue polypeptide: Centrosomal protein kizuna (706 aa).

A coiled-coil region spans residues 63-113 (QRAKTRNLELLGNVENLASKLKEFSIDCSRLLQKRMEYKNHITRLKKDRRK). Residues 105-116 (TRLKKDRRKMGS) are compositionally biased toward basic residues. Disordered stretches follow at residues 105 to 184 (TRLK…LCMH), 215 to 347 (VREK…ASRG), 571 to 603 (EIKPARPSGTNAQTGEEQEIQSAEEDSADQSPV), 620 to 665 (SVAQ…KTKP), and 677 to 706 (ESDDSNSEIEMALRPQSCNTSSHDFDDFYD). A compositionally biased stretch (basic and acidic residues) spans 118–127 (GKSEADEHPS). Polar residues-rich tracts occupy residues 128 to 156 (RLSTQGLSQSAAIFMGHQTSNGSSRNDGA) and 164 to 180 (HTEQIPNHPSLPPSQSG). Residues 215-251 (VREKQMESDWDISQRAREQQRQEELKSPHTTLKEAEV) are compositionally biased toward basic and acidic residues. Residues 272–283 (TRSPSPDTTDPS) show a composition bias toward low complexity. Positions 293–304 (GEDEEESAEDKD) are enriched in acidic residues. A compositionally biased stretch (polar residues) spans 308–320 (PINQNHSDYTSNI). The segment covering 586-598 (EEQEIQSAEEDSA) has biased composition (acidic residues). Over residues 638 to 648 (PDAHKLEKPEV) the composition is skewed to basic and acidic residues.

Belongs to the kizuna family.

The protein resides in the cytoplasm. It localises to the cytoskeleton. Its subcellular location is the microtubule organizing center. It is found in the centrosome. The protein localises to the cilium basal body. Functionally, centrosomal protein required for establishing a robust mitotic centrosome architecture that can endure the forces that converge on the centrosomes during spindle formation. Required for stabilizing the expanded pericentriolar material around the centriole. This Danio rerio (Zebrafish) protein is Centrosomal protein kizuna (kiz).